We begin with the raw amino-acid sequence, 314 residues long: MQILLANPRGFCAGVDRAITIVERALEIFEPPIYVRHEVVHNKYVVSKLREAGAVFVEELHEVPDDQIVIFSAHGVSQAVRQEAKDRGLRVFDATCPLVTKVHMEVTRASRKGHECILIGHAGHPEVEGTMGQYNNDEGGIYLVESPEDVAKLEVKDPGNLHYMSQTTLSVDDTADVIDALRQKFPDINGPRKDDICYATQNRQDAVRELASDADVMLVVGARNSSNSNRLRELSEKMGTPAYLIDDASCIDKAWLEGHEKVAVTAGASAPEVLVKEVIAKLQEWGGKTAVELSGREENITFSIPPELRPHPVG.

Position 12 (Cys12) interacts with [4Fe-4S] cluster. The (2E)-4-hydroxy-3-methylbut-2-enyl diphosphate site is built by His41 and His74. Dimethylallyl diphosphate-binding residues include His41 and His74. Positions 41 and 74 each coordinate isopentenyl diphosphate. Residue Cys96 participates in [4Fe-4S] cluster binding. His124 is a (2E)-4-hydroxy-3-methylbut-2-enyl diphosphate binding site. His124 contributes to the dimethylallyl diphosphate binding site. His124 is a binding site for isopentenyl diphosphate. Glu126 (proton donor) is an active-site residue. Thr167 contributes to the (2E)-4-hydroxy-3-methylbut-2-enyl diphosphate binding site. Cys197 contributes to the [4Fe-4S] cluster binding site. 4 residues coordinate (2E)-4-hydroxy-3-methylbut-2-enyl diphosphate: Ser225, Ser226, Asn227, and Ser269. Dimethylallyl diphosphate-binding residues include Ser225, Ser226, Asn227, and Ser269. Positions 225, 226, 227, and 269 each coordinate isopentenyl diphosphate.

Belongs to the IspH family. [4Fe-4S] cluster is required as a cofactor.

The enzyme catalyses isopentenyl diphosphate + 2 oxidized [2Fe-2S]-[ferredoxin] + H2O = (2E)-4-hydroxy-3-methylbut-2-enyl diphosphate + 2 reduced [2Fe-2S]-[ferredoxin] + 2 H(+). It catalyses the reaction dimethylallyl diphosphate + 2 oxidized [2Fe-2S]-[ferredoxin] + H2O = (2E)-4-hydroxy-3-methylbut-2-enyl diphosphate + 2 reduced [2Fe-2S]-[ferredoxin] + 2 H(+). Its pathway is isoprenoid biosynthesis; dimethylallyl diphosphate biosynthesis; dimethylallyl diphosphate from (2E)-4-hydroxy-3-methylbutenyl diphosphate: step 1/1. The protein operates within isoprenoid biosynthesis; isopentenyl diphosphate biosynthesis via DXP pathway; isopentenyl diphosphate from 1-deoxy-D-xylulose 5-phosphate: step 6/6. Catalyzes the conversion of 1-hydroxy-2-methyl-2-(E)-butenyl 4-diphosphate (HMBPP) into a mixture of isopentenyl diphosphate (IPP) and dimethylallyl diphosphate (DMAPP). Acts in the terminal step of the DOXP/MEP pathway for isoprenoid precursor biosynthesis. The polypeptide is 4-hydroxy-3-methylbut-2-enyl diphosphate reductase (Idiomarina loihiensis (strain ATCC BAA-735 / DSM 15497 / L2-TR)).